Reading from the N-terminus, the 203-residue chain is UPF0637 protein SH1846 (203 aa).

This sequence belongs to the UPF0637 family.

This is UPF0637 protein SH1846 from Staphylococcus haemolyticus (strain JCSC1435).